Reading from the N-terminus, the 125-residue chain is Large ribosomal subunit protein uL30 (125 aa).

Residues 1 to 61 are large ribosomal subunit protein uL30; sequence MSKLKVKLLR…HLVGVAYRID (61 aa). The tract at residues 62–125 is unknown; sequence FSGDIPTVER…KNWKGEEVEL (64 aa).

Belongs to the universal ribosomal protein uL30 family. As to quaternary structure, part of the 50S ribosomal subunit.

The chain is Large ribosomal subunit protein uL30 from Aquifex aeolicus (strain VF5).